The following is a 112-amino-acid chain: Putative pterin-4-alpha-carbinolamine dehydratase (112 aa).

This sequence belongs to the pterin-4-alpha-carbinolamine dehydratase family.

It carries out the reaction (4aS,6R)-4a-hydroxy-L-erythro-5,6,7,8-tetrahydrobiopterin = (6R)-L-erythro-6,7-dihydrobiopterin + H2O. This is Putative pterin-4-alpha-carbinolamine dehydratase from Shewanella sp. (strain MR-4).